Reading from the N-terminus, the 110-residue chain is Nucleoid-associated protein Tola_2216 (110 aa).

Belongs to the YbaB/EbfC family. In terms of assembly, homodimer.

The protein localises to the cytoplasm. The protein resides in the nucleoid. In terms of biological role, binds to DNA and alters its conformation. May be involved in regulation of gene expression, nucleoid organization and DNA protection. The sequence is that of Nucleoid-associated protein Tola_2216 from Tolumonas auensis (strain DSM 9187 / NBRC 110442 / TA 4).